A 953-amino-acid chain; its full sequence is MSKKRLHEIAKEIGKSSKEVVEYAKYLGLDVKSHASSVEEADAKKIISSFSKASKPDVTASQTVKPKEVAQPSVTVVKETGSEHVEKTQVSKPKSRNFKAEREARAKEQAARKQANGSSHRSQERRGGYRQPNNHQTNEQGNKRITHRSQGDTNDKRIERKASNVSPRHDNHQLVGDRNRSFAKENHKNGRFTNQKKQGRQEPQSKSPKIDFKARAAALKAEQNAEYSRQSETRFRAQQEAKRLAELARQEAKEAALKAQAEEMSHREAALKSIEEAETKLKSSNISAKSTADNRRKKQARPEKNRELTHHSQEGQKKNKKSWNSQNQVRNQKNSNWNKNKKTKKGKNVKNTNTAPKPVTERKFHELPKEFEYTEGMTVAEIAKRIKREPAEIVKKLFMMGVMATQNQSLDGDTIELLMVDYGIEAKAKVEVDNADIERFFEDENYLNPENIVERAPVVTIMGHVDHGKTTLLDTLRNSRVATGEAGGITQHIGAYQIEEAGKKITFLDTPGHAAFTSMRARGASVTDITILIVAADDGVMPQTIEAINHSKAAGVPIIVAINKIDKPGANPERVIAELAEYGIISTAWGGECEFVEISAKFNKNIDELLETVLLVAEVEELKADPTVRAIGTVIEARLDKGKGAIATLLVQQGTLHVQDPIVVGNTFGRVRAMVNDLGRRVKSAEPSTPVSITGLNETPMAGDHFAVYADEKAARAAGEERSKRALLKQRQNTQRVSLDNLFDTLKAGEIKTVNVIIKADVQGSVEALAASLVKIEVEGVRVNVVHSAVGAINESDVTLAEASNAVIIGFNVRPTPQARQQADTDDVEIRLHSIIYKVIEEVEEAMKGKLDPVYQEKILGEAIIRETFKVSKVGTIGGFMVINGKVTRDSSVRVIRDSVVIFDGKLASLKHYKDDVKEVGNAQEGGLMIENFNDLKVDDTIEAYIMEEIVRK.

2 disordered regions span residues 51–242 and 279–363; these read SKAS…QEAK and TKLK…TERK. Basic and acidic residues-rich tracts occupy residues 80-89 and 98-111; these read TGSEHVEKTQ and FKAEREARAKEQAA. Polar residues predominate over residues 131–140; it reads QPNNHQTNEQ. Residues 149 to 188 are compositionally biased toward basic and acidic residues; it reads SQGDTNDKRIERKASNVSPRHDNHQLVGDRNRSFAKENHK. Polar residues predominate over residues 191–207; that stretch reads RFTNQKKQGRQEPQSKS. The segment covering 229-242 has biased composition (basic and acidic residues); it reads RQSETRFRAQQEAK. Over residues 282–291 the composition is skewed to polar residues; it reads KSSNISAKST. Residues 300 to 317 are compositionally biased toward basic and acidic residues; it reads ARPEKNRELTHHSQEGQK. Residues 322 to 338 show a composition bias toward low complexity; sequence SWNSQNQVRNQKNSNWN. Positions 339–348 are enriched in basic residues; the sequence is KNKKTKKGKN. Residues 454–623 form the tr-type G domain; it reads ERAPVVTIMG…LLVAEVEELK (170 aa). Positions 463–470 are G1; the sequence is GHVDHGKT. 463 to 470 contacts GTP; sequence GHVDHGKT. A G2 region spans residues 488–492; sequence GITQH. A G3 region spans residues 509 to 512; sequence DTPG. GTP-binding positions include 509–513 and 563–566; these read DTPGH and NKID. Residues 563–566 form a G4 region; that stretch reads NKID. A G5 region spans residues 599–601; it reads SAK.

This sequence belongs to the TRAFAC class translation factor GTPase superfamily. Classic translation factor GTPase family. IF-2 subfamily.

The protein localises to the cytoplasm. Functionally, one of the essential components for the initiation of protein synthesis. Protects formylmethionyl-tRNA from spontaneous hydrolysis and promotes its binding to the 30S ribosomal subunits. Also involved in the hydrolysis of GTP during the formation of the 70S ribosomal complex. The protein is Translation initiation factor IF-2 of Streptococcus pyogenes serotype M49 (strain NZ131).